Reading from the N-terminus, the 359-residue chain is Chorismate synthase (359 aa).

Position 47 (Arg-47) interacts with NADP(+). FMN is bound by residues 123 to 125 (RSS), Gly-283, 298 to 302 (KPTSS), and Arg-326.

Belongs to the chorismate synthase family. Homotetramer. The cofactor is FMNH2.

The catalysed reaction is 5-O-(1-carboxyvinyl)-3-phosphoshikimate = chorismate + phosphate. Its pathway is metabolic intermediate biosynthesis; chorismate biosynthesis; chorismate from D-erythrose 4-phosphate and phosphoenolpyruvate: step 7/7. Its function is as follows. Catalyzes the anti-1,4-elimination of the C-3 phosphate and the C-6 proR hydrogen from 5-enolpyruvylshikimate-3-phosphate (EPSP) to yield chorismate, which is the branch point compound that serves as the starting substrate for the three terminal pathways of aromatic amino acid biosynthesis. This reaction introduces a second double bond into the aromatic ring system. This chain is Chorismate synthase, found in Chlamydia caviae (strain ATCC VR-813 / DSM 19441 / 03DC25 / GPIC) (Chlamydophila caviae).